Consider the following 179-residue polypeptide: MAFCAPPAYLTHQQKVLRLYKRALRHLESWCIHRDKYRYFACLMRARFEEHKNEKDMMRATQLLREAEEEFWQNQHPQPYIFPDSPGGTSFERYECYKVPEWCLDYWHPSEKAMYPDYFSKREQWKKLRMESWDREVKQLQEETSPDGIMTEALPPARREGDLPPLWWHIVTRPRERPT.

Alanine 2 bears the N-acetylalanine mark. Residue serine 85 is modified to Phosphoserine.

This sequence belongs to the complex I LYR family. As to quaternary structure, mammalian complex I is composed of 45 different subunits.

It is found in the mitochondrion inner membrane. Accessory subunit of the mitochondrial membrane respiratory chain NADH dehydrogenase (Complex I), that is believed to be not involved in catalysis. Complex I functions in the transfer of electrons from NADH to the respiratory chain. The immediate electron acceptor for the enzyme is believed to be ubiquinone. The protein is NADH dehydrogenase [ubiquinone] 1 beta subcomplex subunit 9 (Ndufb9) of Mus musculus (Mouse).